The following is a 179-amino-acid chain: Large ribosomal subunit protein uL5 (179 aa).

It belongs to the universal ribosomal protein uL5 family. In terms of assembly, part of the 50S ribosomal subunit; part of the 5S rRNA/L5/L18/L25 subcomplex. Contacts the 5S rRNA and the P site tRNA. Forms a bridge to the 30S subunit in the 70S ribosome.

This is one of the proteins that bind and probably mediate the attachment of the 5S RNA into the large ribosomal subunit, where it forms part of the central protuberance. In the 70S ribosome it contacts protein S13 of the 30S subunit (bridge B1b), connecting the 2 subunits; this bridge is implicated in subunit movement. Contacts the P site tRNA; the 5S rRNA and some of its associated proteins might help stabilize positioning of ribosome-bound tRNAs. This chain is Large ribosomal subunit protein uL5, found in Burkholderia cenocepacia (strain HI2424).